Reading from the N-terminus, the 131-residue chain is Small ribosomal subunit protein uS8 (131 aa).

This sequence belongs to the universal ribosomal protein uS8 family. As to quaternary structure, part of the 30S ribosomal subunit. Contacts proteins S5 and S12.

Functionally, one of the primary rRNA binding proteins, it binds directly to 16S rRNA central domain where it helps coordinate assembly of the platform of the 30S subunit. This Burkholderia ambifaria (strain MC40-6) protein is Small ribosomal subunit protein uS8.